The primary structure comprises 341 residues: Heme A synthase (341 aa).

8 helical membrane-spanning segments follow: residues Val7–Ile27, Leu92–Lys112, Met118–Phe138, Leu159–Val179, Phe190–Val210, Phe253–Leu273, Leu280–Val300, and Ile302–Met322. His255 is a binding site for heme. His308 contacts heme.

The protein belongs to the COX15/CtaA family. Type 2 subfamily. As to quaternary structure, interacts with CtaB. It depends on heme b as a cofactor.

It is found in the cell membrane. It carries out the reaction Fe(II)-heme o + 2 A + H2O = Fe(II)-heme a + 2 AH2. It participates in porphyrin-containing compound metabolism; heme A biosynthesis; heme A from heme O: step 1/1. In terms of biological role, catalyzes the conversion of heme O to heme A by two successive hydroxylations of the methyl group at C8. The first hydroxylation forms heme I, the second hydroxylation results in an unstable dihydroxymethyl group, which spontaneously dehydrates, resulting in the formyl group of heme A. This chain is Heme A synthase, found in Anaplasma marginale (strain Florida).